A 545-amino-acid polypeptide reads, in one-letter code: Intercellular adhesion molecule 1 (545 aa).

The N-terminal stretch at 1–27 (MASTRARPMLPLLLVLVAVVIPGPVGA) is a signal peptide. Residues 28–492 (QVSIHPTEAF…HLTVLYHDQN (465 aa)) are Extracellular-facing. Ig-like C2-type domains are found at residues 41-103 (GGSV…QSSA) and 128-193 (GKNL…LDLR). N-linked (GlcNAc...) asparagine glycosylation occurs at Asn-47. 3 disulfides stabilise this stretch: Cys-48–Cys-92, Cys-52–Cys-96, and Cys-135–Cys-186. Asn-154 is a glycosylation site (N-linked (GlcNAc...) asparagine). Residues 177–179 (RGD) carry the Cell attachment site motif. Asn-183 and Asn-202 each carry an N-linked (GlcNAc...) asparagine glycan. The 68-residue stretch at 230–297 (GTQQKFLCSL…LRCVLELADQ (68 aa)) folds into the Ig-like C2-type 3 domain. Cys-237 and Cys-290 are disulfide-bonded. Residues Asn-309, Asn-344, Asn-396, Asn-417, Asn-439, and Asn-464 are each glycosylated (N-linked (GlcNAc...) asparagine). Positions 325–389 (GDQVTVKCEA…FFCSAALEVD (65 aa)) constitute an Ig-like C2-type 4 domain. Cys-332 and Cys-382 are joined by a disulfide. Positions 343–365 (LNSTSPRPPTSQGTSPRPPTSQI) are disordered. Intrachain disulfides connect Cys-414–Cys-430, Cys-430–Cys-469, and Cys-442–Cys-469. Residues 423–476 (GSQQTLTCQPQGNPAPNLTCSRKADGVPLPIGMVKSVKREMNGTYKCRAFSSRG) form the Ig-like C2-type 5 domain. The chain crosses the membrane as a helical span at residues 493–517 (TWVIIVGVLVLIIAGFVIVASIYTY). The Cytoplasmic portion of the chain corresponds to 518 to 545 (YRQRKIRIYKLQKAQEEALKLKVQAPPP).

Belongs to the immunoglobulin superfamily. ICAM family. Homodimer. Interacts with MUC1 and promotes cell aggregation in epithelial cells. Interacts with ARHGEF26/SGEF. Interacts (on T cell side) with CD81, CD247 and CD9 at immunological synapses between antigen-presenting cells and T cells. Post-translationally, monoubiquitinated, which is promoted by MARCH9 and leads to endocytosis.

Its subcellular location is the membrane. ICAM proteins are ligands for the leukocyte adhesion protein LFA-1 (integrin alpha-L/beta-2). During leukocyte trans-endothelial migration, ICAM1 engagement promotes the assembly of endothelial apical cups through ARHGEF26/SGEF and RHOG activation. The chain is Intercellular adhesion molecule 1 (Icam1) from Rattus norvegicus (Rat).